The chain runs to 702 residues: Elongation factor G 1 (702 aa).

One can recognise a tr-type G domain in the interval 8–290 (ERYRNIGISA…AVIDFLPSPV (283 aa)). GTP contacts are provided by residues 17–24 (AHIDAGKT), 88–92 (DTPGH), and 142–145 (NKMD).

It belongs to the TRAFAC class translation factor GTPase superfamily. Classic translation factor GTPase family. EF-G/EF-2 subfamily.

It localises to the cytoplasm. Its function is as follows. Catalyzes the GTP-dependent ribosomal translocation step during translation elongation. During this step, the ribosome changes from the pre-translocational (PRE) to the post-translocational (POST) state as the newly formed A-site-bound peptidyl-tRNA and P-site-bound deacylated tRNA move to the P and E sites, respectively. Catalyzes the coordinated movement of the two tRNA molecules, the mRNA and conformational changes in the ribosome. This is Elongation factor G 1 from Cupriavidus pinatubonensis (strain JMP 134 / LMG 1197) (Cupriavidus necator (strain JMP 134)).